The following is a 449-amino-acid chain: Anthocyanidin 3-O-glucosyltransferase 1 (449 aa).

The active-site Proton acceptor is His-3. An an anthocyanidin-binding site is contributed by His-3. Residue Asp-103 is the Charge relay of the active site. UDP-alpha-D-glucose is bound by residues Thr-125, Ala-325, Gln-327, His-342, Trp-345, Asn-346, Ser-347, and Glu-350. Residue Ala-365 participates in an anthocyanidin binding. 2 residues coordinate UDP-alpha-D-glucose: Glu-366 and Gln-367.

It belongs to the UDP-glycosyltransferase family. In terms of tissue distribution, expressed in cotyledons and roots, but not in leaves.

The enzyme catalyses an anthocyanidin + UDP-alpha-D-glucose + H(+) = an anthocyanidin 3-O-beta-D-glucoside + UDP. The protein operates within pigment biosynthesis; anthocyanin biosynthesis. Functionally, in the presence of other necessary color factors, this glycosylation reaction allows the accumulation of anthocyanin pigments. The polypeptide is Anthocyanidin 3-O-glucosyltransferase 1 (GT1) (Manihot esculenta (Cassava)).